A 160-amino-acid chain; its full sequence is UPF0178 protein BPP1051 (160 aa).

The protein belongs to the UPF0178 family.

This is UPF0178 protein BPP1051 from Bordetella parapertussis (strain 12822 / ATCC BAA-587 / NCTC 13253).